The chain runs to 488 residues: 1-hydroxycarotenoid 3,4-desaturase (488 aa).

FAD-binding positions include Glu31, Lys39, 55-56, Val247, Asn275, Leu431, Gly461, and 468-469; these read SL and GI.

Belongs to the carotenoid/retinoid oxidoreductase family. In terms of assembly, monomer.

The enzyme catalyses rhodopin + A = (3E)-3,4-didehydrorhodopin + AH2. It carries out the reaction 1'-hydroxy-gamma-carotene + A = 1'-hydroxytorulene + AH2. It catalyses the reaction 1-hydroxy-all-trans-1,2-dihydro-neurosporene + A = demethylspheroidene + AH2. The catalysed reaction is 1,1'-dihydroxy-1,1',2,2'-tetrahydroneurosporene + A = 1'-hydroxy-demethylspheroidene + AH2. The enzyme catalyses 1,1'-dihydroxy-1,1',2,2'-tetrahydrolycopene + A = 1,1'-dihydroxy-3,4-didehydro-1,2-dihydrolycopene + AH2. It functions in the pathway carotenoid biosynthesis. Functionally, catalyzes the introduction of a C-3,4 double bond into 1'-hydroxy-gamma-carotene and rhodopin (1-hydroxylycopene) to yield 1'-hydroxytorulene and (3E)-3,4-didehydrorhodopin, respectively. Can also 1-hydroxy-all-trans-1,2-dihydro-neurosporene, 1,1'-dihydroxy-1,1',2,2'-tetrahydroneurosporene and 1,1'-dihydroxy-1,1',2,2'-tetrahydrolycopene. Probably involved in the synthesis of myxol, a gamma-carotene derivative. May use FAD as a proton acceptor. The sequence is that of 1-hydroxycarotenoid 3,4-desaturase from Flavobacterium sp. (strain P99-3).